A 1260-amino-acid polypeptide reads, in one-letter code: Agglutinin-like protein 1 (1260 aa).

Positions 1–17 (MLQQFTLLFLYLSIASA) are cleaved as a signal peptide. 4 disulfide bridges follow: Cys-73–Cys-150, Cys-96–Cys-112, Cys-205–Cys-298, and Cys-227–Cys-256. ALS repeat units follow at residues 365 to 396 (TTIT…VDVP), 401 to 432 (TTVT…VQVP), and 438 to 469 (VSTT…IREP). Asn-471 is a glycosylation site (N-linked (GlcNAc...) asparagine). The ALS 4 repeat unit spans residues 474 to 505 (VTTTEYWSQSFATTTTVTAPPGETDTVIIREP). Asn-507 carries an N-linked (GlcNAc...) asparagine glycan. Residues 510–541 (VTTTEYWSQSYATTTTVTAPPGGTDTVLIREP) form an ALS 5 repeat. The N-linked (GlcNAc...) asparagine glycan is linked to Asn-543. An ALS 6 repeat occupies 546–577 (VTTTEYWSQSYATTTTVTAPPGGTDTVIIREP). N-linked (GlcNAc...) asparagine glycosylation is present at Asn-579. An ALS 7 repeat occupies 582 to 613 (VTTTEYWSQSYATTTTITAPPGETDTVIIREP). Asn-615 carries an N-linked (GlcNAc...) asparagine glycan. One copy of the ALS 8 repeat lies at 618 to 649 (VTTTEYWSQSYATTTTVTAPPGGTDTVLIREP). An N-linked (GlcNAc...) asparagine glycan is attached at Asn-651. One copy of the ALS 9 repeat lies at 654–685 (VTTTEYWSQSYATTTTVTAPPGGTDTVLIREP). The N-linked (GlcNAc...) asparagine glycan is linked to Asn-687. One copy of the ALS 10 repeat lies at 690–721 (VTTTEYWSQSYATTTTVTAPPGGTDTVIIREP). N-linked (GlcNAc...) asparagine glycosylation is present at Asn-723. Residues 726–757 (VTTTEYWSQSYATTTTVTAPPGGTDTVIIREP) form an ALS 11 repeat. Asn-759 carries N-linked (GlcNAc...) asparagine glycosylation. The ALS 12 repeat unit spans residues 762–791 (VTTTEYWSQSFATTTTVTAPPGGTDTVIIY). Asn-820, Asn-886, Asn-918, and Asn-973 each carry an N-linked (GlcNAc...) asparagine glycan. 2 stretches are compositionally biased toward polar residues: residues 896-918 (PTAS…SSDN) and 964-979 (KVTF…GTHD). 2 disordered regions span residues 896–924 (PTAS…KSGV) and 954–1226 (SIPS…SSSP). Positions 980 to 995 (SQSTSTEIEIVTTSST) are enriched in low complexity. Polar residues predominate over residues 1002-1062 (VSSNTDLTSE…PTVATSTLAS (61 aa)). N-linked (GlcNAc...) asparagine glycans are attached at residues Asn-1045 and Asn-1068. Residues 1073-1090 (HESASTSLKPSMGENSGL) are compositionally biased toward polar residues. Residues 1091–1110 (TTSTEIEATTTSPTEAPSPA) show a composition bias toward low complexity. A compositionally biased stretch (polar residues) spans 1111 to 1154 (VSSGTDVTTEPTDTREQPTTLSTTSKTNSESVATTQATNENGGK). Low complexity-rich tracts occupy residues 1155-1176 (SPST…SANS) and 1197-1226 (SHST…SSSP). Gly-1238 carries GPI-anchor amidated glycine lipidation. The propeptide at 1239–1260 (SGSIIQHSTWLYGLITLLSLFI) is removed in mature form.

The protein belongs to the ALS family. The GPI-anchor is attached to the protein in the endoplasmic reticulum and serves to target the protein to the cell surface. There, the glucosamine-inositol phospholipid moiety is cleaved off and the GPI-modified mannoprotein is covalently attached via its lipidless GPI glycan remnant to the 1,6-beta-glucan of the outer cell wall layer.

It localises to the cell membrane. Its subcellular location is the secreted. The protein resides in the cell wall. In terms of biological role, major cell surface adhesion protein which mediates both yeast-to-host tissue adherence and yeast aggregation. Acts as a downstream effector of the EFG1 regulatory pathway. Required for rapamycin-induced aggregation of C.albicans. Binds glycans and mediates adherence to endothelial and epithelial cells, thereby playing an important role in the pathogenesis of C.albicans infections. In Candida albicans (strain SC5314 / ATCC MYA-2876) (Yeast), this protein is Agglutinin-like protein 1 (ALS1).